The primary structure comprises 331 residues: 6-phosphogluconolactonase (331 aa).

The protein belongs to the cycloisomerase 2 family.

It carries out the reaction 6-phospho-D-glucono-1,5-lactone + H2O = 6-phospho-D-gluconate + H(+). The protein operates within carbohydrate degradation; pentose phosphate pathway; D-ribulose 5-phosphate from D-glucose 6-phosphate (oxidative stage): step 2/3. In terms of biological role, catalyzes the hydrolysis of 6-phosphogluconolactone to 6-phosphogluconate. This chain is 6-phosphogluconolactonase, found in Enterobacter sp. (strain 638).